Here is a 438-residue protein sequence, read N- to C-terminus: Exoglucanase 3 (438 aa).

The first 20 residues, Met-1–Ala-20, serve as a signal peptide directing secretion. The 39-residue stretch at Gln-21–Asn-59 folds into the CBM1 domain. 2 cysteine pairs are disulfide-bonded: Cys-28–Cys-45 and Cys-39–Cys-55. The tract at residues Pro-57 to Asn-90 is disordered. Residues Gln-60 to Gly-87 form a linker region. Low complexity predominate over residues Ala-61–Ser-79. Positions Ala-88–Leu-438 are catalytic. 2 disulfides stabilise this stretch: Cys-170–Cys-229 and Cys-360–Cys-407. Asp-215 acts as the Proton donor in catalysis. Residue Asp-393 is the Nucleophile of the active site.

It belongs to the glycosyl hydrolase 6 (cellulase B) family.

It carries out the reaction Hydrolysis of (1-&gt;4)-beta-D-glucosidic linkages in cellulose and cellotetraose, releasing cellobiose from the non-reducing ends of the chains.. Functionally, shows enzymatic activity towards crystalline cellulose. At long reaction times. It is also able to degrade carboxymethyl cellulose and barley B-glucan. This is Exoglucanase 3 (cel3) from Agaricus bisporus (White button mushroom).